Reading from the N-terminus, the 122-residue chain is Large ribosomal subunit protein uL14 (122 aa).

The protein belongs to the universal ribosomal protein uL14 family. In terms of assembly, part of the 50S ribosomal subunit. Forms a cluster with proteins L3 and L19. In the 70S ribosome, L14 and L19 interact and together make contacts with the 16S rRNA in bridges B5 and B8.

Its function is as follows. Binds to 23S rRNA. Forms part of two intersubunit bridges in the 70S ribosome. This is Large ribosomal subunit protein uL14 from Pelagibacter ubique (strain HTCC1062).